A 167-amino-acid polypeptide reads, in one-letter code: ATP synthase subunit delta, mitochondrial (167 aa).

The transit peptide at 1 to 28 (MFRLSNYMLRKSQFPQGLVRAPFGIRGY) directs the protein to the mitochondrion.

This sequence belongs to the ATPase epsilon chain family. F-type ATPases have 2 components, CF(1) - the catalytic core - and CF(0) - the membrane proton channel. CF(1) has five subunits: alpha(3), beta(3), gamma(1), delta(1), epsilon(1). CF(0) has three main subunits: a, b and c.

Its subcellular location is the mitochondrion. The protein localises to the mitochondrion inner membrane. Mitochondrial membrane ATP synthase (F(1)F(0) ATP synthase or Complex V) produces ATP from ADP in the presence of a proton gradient across the membrane which is generated by electron transport complexes of the respiratory chain. F-type ATPases consist of two structural domains, F(1) - containing the extramembraneous catalytic core, and F(0) - containing the membrane proton channel, linked together by a central stalk and a peripheral stalk. During catalysis, ATP turnover in the catalytic domain of F(1) is coupled via a rotary mechanism of the central stalk subunits to proton translocation. Part of the complex F(1) domain and of the central stalk which is part of the complex rotary element. Rotation of the central stalk against the surrounding alpha(3)beta(3) subunits leads to hydrolysis of ATP in three separate catalytic sites on the beta subunits. This is ATP synthase subunit delta, mitochondrial (atp16) from Schizosaccharomyces pombe (strain 972 / ATCC 24843) (Fission yeast).